Consider the following 305-residue polypeptide: Zinc transporter ZIP9 (305 aa).

Residues 7–27 (ICLLSLAMLVACYVAGIIPLA) form a helical membrane-spanning segment. Asparagine 29 carries an N-linked (GlcNAc...) asparagine glycan. The next 5 membrane-spanning stretches (helical) occupy residues 35–55 (LKLV…AVIV), 104–124 (AYIG…DQIG), 144–164 (ITTT…LGAA), 174–194 (LIVF…LVSF), and 208–228 (HLLV…LGLS). The N-linked (GlcNAc...) asparagine glycan is linked to asparagine 239. 2 helical membrane-spanning segments follow: residues 242-262 (GVAM…HVLP) and 284-304 (LEVA…IGHH).

This sequence belongs to the ZIP transporter (TC 2.A.5) family.

It is found in the golgi apparatus. The protein localises to the trans-Golgi network membrane. It localises to the cell membrane. The protein resides in the cytoplasm. Its subcellular location is the perinuclear region. It is found in the mitochondrion. The protein localises to the nucleus. It carries out the reaction Zn(2+)(in) = Zn(2+)(out). In terms of biological role, transports zinc ions across cell and organelle membranes into the cytoplasm and regulates intracellular zinc homeostasis. Participates in the zinc ions efflux out of the secretory compartments. Regulates intracellular zinc level, resulting in the enhancement of AKT1 and MAPK3/MAPK1 (Erk1/2) phosphorylation in response to the BCR activation. Also functions as a membrane androgen receptor that mediates, through a G protein, the non-classical androgen signaling pathway, characterized by the activation of MAPK3/MAPK1 (Erk1/2) and transcription factors CREB1 or ATF1. Moreover, has dual functions as a membrane-bound androgen receptor and as an androgen-dependent zinc transporter both of which are mediated through an inhibitory G protein (Gi) that mediates both MAP kinase and zinc signaling leading to the androgen-dependent apoptotic process. The protein is Zinc transporter ZIP9 of Gallus gallus (Chicken).